The primary structure comprises 502 residues: Probable cytosol aminopeptidase (502 aa).

Residues Lys275 and Asp280 each coordinate Mn(2+). Residue Lys287 is part of the active site. Mn(2+) contacts are provided by Asp298, Asp357, and Glu359. Arg361 is a catalytic residue.

Belongs to the peptidase M17 family. It depends on Mn(2+) as a cofactor.

It localises to the cytoplasm. It catalyses the reaction Release of an N-terminal amino acid, Xaa-|-Yaa-, in which Xaa is preferably Leu, but may be other amino acids including Pro although not Arg or Lys, and Yaa may be Pro. Amino acid amides and methyl esters are also readily hydrolyzed, but rates on arylamides are exceedingly low.. The catalysed reaction is Release of an N-terminal amino acid, preferentially leucine, but not glutamic or aspartic acids.. Presumably involved in the processing and regular turnover of intracellular proteins. Catalyzes the removal of unsubstituted N-terminal amino acids from various peptides. This Ralstonia pickettii (strain 12J) protein is Probable cytosol aminopeptidase.